The following is a 360-amino-acid chain: DNA primase large subunit PriL (360 aa).

Residues C237, C309, C318, and C325 each coordinate [4Fe-4S] cluster. Positions 340-360 (DDGDDDDLADWRDREDDDSPD) are disordered.

This sequence belongs to the eukaryotic-type primase large subunit family. Heterodimer of a small subunit (PriS) and a large subunit (PriL). It depends on [4Fe-4S] cluster as a cofactor.

Regulatory subunit of DNA primase, an RNA polymerase that catalyzes the synthesis of short RNA molecules used as primers for DNA polymerase during DNA replication. Stabilizes and modulates the activity of the small subunit, increasing the rate of DNA synthesis, and conferring RNA synthesis capability. The DNA polymerase activity may enable DNA primase to also catalyze primer extension after primer synthesis. May also play a role in DNA repair. The protein is DNA primase large subunit PriL of Halobacterium salinarum (strain ATCC 29341 / DSM 671 / R1).